Consider the following 66-residue polypeptide: uncharacterized protein (66 aa).

To M.jannaschii MJ0582.

This is an uncharacterized protein from Methanocaldococcus jannaschii (strain ATCC 43067 / DSM 2661 / JAL-1 / JCM 10045 / NBRC 100440) (Methanococcus jannaschii).